We begin with the raw amino-acid sequence, 125 residues long: Holo-[acyl-carrier-protein] synthase (125 aa).

2 residues coordinate Mg(2+): Asp-8 and Glu-57.

The protein belongs to the P-Pant transferase superfamily. AcpS family. Mg(2+) serves as cofactor.

It is found in the cytoplasm. The enzyme catalyses apo-[ACP] + CoA = holo-[ACP] + adenosine 3',5'-bisphosphate + H(+). Functionally, transfers the 4'-phosphopantetheine moiety from coenzyme A to a Ser of acyl-carrier-protein. This is Holo-[acyl-carrier-protein] synthase from Thermus thermophilus (strain ATCC BAA-163 / DSM 7039 / HB27).